The following is a 301-amino-acid chain: GTPase Era (301 aa).

The Era-type G domain maps to 4-173 (KAGFVALIGK…LECISKHLIP (170 aa)). Residues 12 to 19 (GKPNAGKS) form a G1 region. 12–19 (GKPNAGKS) is a GTP binding site. A G2 region spans residues 38-42 (NATRK). The G3 stretch occupies residues 64–67 (DTPG). Residues 64-68 (DTPGL) and 122-125 (SKID) contribute to the GTP site. A G4 region spans residues 122-125 (SKID). The G5 stretch occupies residues 152–154 (LSA). The region spanning 204 to 280 (LSDEIPYESD…FLNLQVIAQK (77 aa)) is the KH type-2 domain.

It belongs to the TRAFAC class TrmE-Era-EngA-EngB-Septin-like GTPase superfamily. Era GTPase family. In terms of assembly, monomer.

It localises to the cytoplasm. The protein resides in the cell inner membrane. In terms of biological role, an essential GTPase that binds both GDP and GTP, with rapid nucleotide exchange. Plays a role in 16S rRNA processing and 30S ribosomal subunit biogenesis and possibly also in cell cycle regulation and energy metabolism. The sequence is that of GTPase Era from Helicobacter pylori (strain HPAG1).